Here is a 493-residue protein sequence, read N- to C-terminus: GTPase Der (493 aa).

Positions 3–166 (PVIALVGRPN…EALGIFPKDN (164 aa)) constitute an EngA-type G 1 domain. GTP contacts are provided by residues 9-16 (GRPNVGKS), 56-60 (DTGGI), and 118-121 (NKVD). A disordered region spans residues 166 to 195 (NAEEEGEGEPASEEVAEGEEPTRIPGPSEK). A compositionally biased stretch (acidic residues) spans 167–184 (AEEEGEGEPASEEVAEGE). The EngA-type G 2 domain maps to 198–371 (IKIAIIGRPN…SVQESFRSAV (174 aa)). Residues 204 to 211 (GRPNVGKS), 251 to 255 (DTAGV), and 316 to 319 (NKWD) each bind GTP. In terms of domain architecture, KH-like spans 372–456 (TRWPTSRLTS…PIRIEYKGGE (85 aa)). Positions 454–463 (GGENPYEGKK) are enriched in basic and acidic residues. Residues 454 to 493 (GGENPYEGKKNSLTARQVNKKRRLMSHHKKAEKKKKDKRR) form a disordered region. Over residues 471–493 (VNKKRRLMSHHKKAEKKKKDKRR) the composition is skewed to basic residues.

The protein belongs to the TRAFAC class TrmE-Era-EngA-EngB-Septin-like GTPase superfamily. EngA (Der) GTPase family. In terms of assembly, associates with the 50S ribosomal subunit.

GTPase that plays an essential role in the late steps of ribosome biogenesis. This chain is GTPase Der, found in Pseudomonas aeruginosa (strain ATCC 15692 / DSM 22644 / CIP 104116 / JCM 14847 / LMG 12228 / 1C / PRS 101 / PAO1).